The primary structure comprises 271 residues: Bifunctional protein FolD (271 aa).

NADP(+) is bound by residues 154–156 (GRS), Ser-181, and Ile-222.

This sequence belongs to the tetrahydrofolate dehydrogenase/cyclohydrolase family. In terms of assembly, homodimer.

It carries out the reaction (6R)-5,10-methylene-5,6,7,8-tetrahydrofolate + NADP(+) = (6R)-5,10-methenyltetrahydrofolate + NADPH. The enzyme catalyses (6R)-5,10-methenyltetrahydrofolate + H2O = (6R)-10-formyltetrahydrofolate + H(+). The protein operates within one-carbon metabolism; tetrahydrofolate interconversion. Functionally, catalyzes the oxidation of 5,10-methylenetetrahydrofolate to 5,10-methenyltetrahydrofolate and then the hydrolysis of 5,10-methenyltetrahydrofolate to 10-formyltetrahydrofolate. This is Bifunctional protein FolD from Thermotoga maritima (strain ATCC 43589 / DSM 3109 / JCM 10099 / NBRC 100826 / MSB8).